We begin with the raw amino-acid sequence, 607 residues long: Siderophore iron transporter mirC (607 aa).

The next 12 helical transmembrane spans lie at 67-89, 129-148, 186-208, 223-245, 279-301, 311-328, 349-368, 388-410, 417-436, 446-468, 481-503, and 557-574; these read LVIA…QTIM, VFGR…LGYI, SLLN…VWIG, WGYG…SLLL, IFGL…LAAN, IVAM…LPFW, TALA…YFSV, GRVT…ILIK, VYVT…MLLY, VLGT…QLGV, TAMF…GAVW, and LLVL…LSLL. Basic and acidic residues predominate over residues 584–593; that stretch reads SESSDHDDAS. A disordered region spans residues 584-607; it reads SESSDHDDASPRNGLGPGERAKRT.

Belongs to the major facilitator superfamily.

It localises to the membrane. This Emericella nidulans (strain FGSC A4 / ATCC 38163 / CBS 112.46 / NRRL 194 / M139) (Aspergillus nidulans) protein is Siderophore iron transporter mirC (mirC).